The chain runs to 88 residues: Small ribosomal subunit protein bS20 (88 aa).

Belongs to the bacterial ribosomal protein bS20 family.

Functionally, binds directly to 16S ribosomal RNA. This Bartonella tribocorum (strain CIP 105476 / IBS 506) protein is Small ribosomal subunit protein bS20.